A 253-amino-acid chain; its full sequence is tRNA uridine(34) hydroxylase (253 aa).

In terms of domain architecture, Rhodanese spans 127–221 (HGRPLVLLDT…YFEDVGGEGY (95 aa)). Catalysis depends on C181, which acts as the Cysteine persulfide intermediate.

The protein belongs to the TrhO family.

It carries out the reaction uridine(34) in tRNA + AH2 + O2 = 5-hydroxyuridine(34) in tRNA + A + H2O. Functionally, catalyzes oxygen-dependent 5-hydroxyuridine (ho5U) modification at position 34 in tRNAs. This chain is tRNA uridine(34) hydroxylase, found in Xanthomonas campestris pv. campestris (strain B100).